Here is a 152-residue protein sequence, read N- to C-terminus: Single-stranded DNA-binding protein, mitochondrial (152 aa).

The transit peptide at Met-1–His-16 directs the protein to the mitochondrion. The 112-residue stretch at Leu-30–His-141 folds into the SSB domain. Phosphoserine is present on residues Ser-67 and Ser-79. At Lys-113 the chain carries N6-acetyllysine. At Lys-122 the chain carries N6-succinyllysine.

Homotetramer. Interacts with MPG/AAG, through inhibition of its glycosylase activity it potentially prevents formation of DNA breaks in ssDNA, ensuring that base removal primarily occurs in dsDNA. Interacts with POLDIP2. Interacts with PRIMPOL. In terms of tissue distribution, expressed in all the layers of the retina (at protein level).

The protein resides in the mitochondrion. Its subcellular location is the mitochondrion matrix. It localises to the mitochondrion nucleoid. Functionally, binds preferentially and cooperatively to pyrimidine rich single-stranded DNA (ss-DNA). In vitro, required to maintain the copy number of mitochondrial DNA (mtDNA) and plays a crucial role during mtDNA replication by stimulating the activity of the replisome components POLG and TWNK at the replication fork. Promotes the activity of the gamma complex polymerase POLG, largely by organizing the template DNA and eliminating secondary structures to favor ss-DNA conformations that facilitate POLG activity. In addition it is able to promote the 5'-3' unwinding activity of the mtDNA helicase TWNK. May also function in mtDNA repair. This Mus musculus (Mouse) protein is Single-stranded DNA-binding protein, mitochondrial (Ssbp1).